We begin with the raw amino-acid sequence, 329 residues long: HTH-type transcriptional regulator ArgR (329 aa).

In terms of domain architecture, HTH araC/xylS-type spans 214–312 (TQAVLLMEAN…GVTPREDRNQ (99 aa)). 2 DNA-binding regions (H-T-H motif) span residues 231 to 252 (DEIAQHVCVSRRQLERIFKQYL) and 279 to 302 (IIQIGLSCGFSSGPHFSSAYRNFF). The interval 307–329 (REDRNQRRGGSAFETTFTPVERG) is disordered. A compositionally biased stretch (polar residues) spans 319–329 (FETTFTPVERG).

In terms of biological role, argR could be a transcriptional activator of the dauBAR operon in response to the presence of L-Arg. The chain is HTH-type transcriptional regulator ArgR (argR) from Pseudomonas aeruginosa (strain ATCC 15692 / DSM 22644 / CIP 104116 / JCM 14847 / LMG 12228 / 1C / PRS 101 / PAO1).